The following is a 170-amino-acid chain: Adenine phosphoribosyltransferase (170 aa).

The protein belongs to the purine/pyrimidine phosphoribosyltransferase family. As to quaternary structure, homodimer.

It is found in the cytoplasm. It catalyses the reaction AMP + diphosphate = 5-phospho-alpha-D-ribose 1-diphosphate + adenine. The protein operates within purine metabolism; AMP biosynthesis via salvage pathway; AMP from adenine: step 1/1. In terms of biological role, catalyzes a salvage reaction resulting in the formation of AMP, that is energically less costly than de novo synthesis. The protein is Adenine phosphoribosyltransferase of Mycoplasma capricolum subsp. capricolum (strain California kid / ATCC 27343 / NCTC 10154).